A 100-amino-acid chain; its full sequence is Small ribosomal subunit protein uS14 (100 aa).

Belongs to the universal ribosomal protein uS14 family. Part of the 30S ribosomal subunit. Contacts proteins S3 and S10.

In terms of biological role, binds 16S rRNA, required for the assembly of 30S particles and may also be responsible for determining the conformation of the 16S rRNA at the A site. The protein is Small ribosomal subunit protein uS14 of Thermosynechococcus vestitus (strain NIES-2133 / IAM M-273 / BP-1).